Reading from the N-terminus, the 549-residue chain is Eukaryotic translation initiation factor 4B2 (549 aa).

Disordered stretches follow at residues 1–446 (MSKP…DLIR) and 465–549 (FRPR…REGW). Residues 24–46 (AEATATAADSQSFPSLKEAATAK) are compositionally biased toward low complexity. Gly residues-rich tracts occupy residues 96–109 (RLGGGFSSYGGGRS) and 126–136 (SWGGGGGGRRS). The Nuclear localization signal 1 signature appears at 169–176 (GKKSLPSF). Positions 184–218 (RYGGGGGSFGGGGGGGAGSYGGGGAGAGSGGGGGF) are enriched in gly residues. The Nuclear localization signal 2 signature appears at 234 to 241 (SSTFGSGF). The segment covering 263–278 (QEERRRLVFEPRKADT) has biased composition (basic and acidic residues). Positions 281–292 (SETPTAVKTSKP) are enriched in polar residues. The span at 299-323 (RPREQVLAEKGLDWKKLDSDIEAKK) shows a compositional bias: basic and acidic residues. The segment covering 327 to 349 (SRPSSAQSSRPSSAQSNRSESSA) has biased composition (low complexity). Basic and acidic residues-rich tracts occupy residues 369–431 (AKPR…KESQ), 485–507 (ERPHSRAGSIDESRSVESMERPR), and 518–549 (PVDDRRNFQGSKERGFFNNRNFDRSSSAREGW).

Belongs to the eIF-4 subunit B family. Homodimer. Nonspherical monomer. mRNA-discriminating component of initiation complexes. Phosphorylated.

It localises to the nucleus. Its function is as follows. Promotes the eIF4F and eIF4A RNA-dependent ATP-hydrolysis activity with different efficiency depending on mRNAs, thus providing mRNA discrimination during initiation of translation. The polypeptide is Eukaryotic translation initiation factor 4B2 (Arabidopsis thaliana (Mouse-ear cress)).